The primary structure comprises 309 residues: E3 ubiquitin-protein ligase SINAT5 (309 aa).

The RING-type zinc-finger motif lies at 46–82 (CPVCTNSMYPPIHQCHNGHTLCSTCKSRVHNRCPTCR). The segment at 96–289 (VAESLELPCK…KELKLRVTGR (194 aa)) is SBD. The SIAH-type zinc-finger motif lies at 99-159 (SLELPCKYYN…LVAHLRDDHK (61 aa)). Cys104, Cys111, His123, Cys127, Cys134, Cys141, His153, and His158 together coordinate Zn(2+).

This sequence belongs to the SINA (Seven in absentia) family. As to quaternary structure, homodimer; homodimerization is essential for its function. Interacts with UBC28 and NAC021/NAC022. Interacts with SINAT6. Interacts with ATG6 and TRAF1A. Interacts with WAV3. Interacts with FREE1. As to expression, expressed at low level in the vascular tissue of mature roots. Expressed in lateral roots and in elongation zone of the main root upon stimulation by auxin. Colocalizes with NAC021/NAC022.

It localises to the nucleus. The protein resides in the cytoplasm. It carries out the reaction S-ubiquitinyl-[E2 ubiquitin-conjugating enzyme]-L-cysteine + [acceptor protein]-L-lysine = [E2 ubiquitin-conjugating enzyme]-L-cysteine + N(6)-ubiquitinyl-[acceptor protein]-L-lysine.. It functions in the pathway protein modification; protein ubiquitination. In terms of biological role, E3 ubiquitin-protein ligase that mediates ubiquitination and subsequent proteasomal degradation of target proteins. E3 ubiquitin ligases accept ubiquitin from an E2 ubiquitin-conjugating enzyme in the form of a thioester and then directly transfers the ubiquitin to targeted substrates. Mediates the ubiquitination and proteasomal-dependent degradation of NAC021/NAC022, a transcription activator that functions downstream of the auxin signals, thereby acting as a down-regulator of auxin signals. Involved in the formation of lateral roots. Is antagonist to SINAT1, SINAT2, SINAT3 and SINAT4 by suppressing FREE1 ubiquitination and degradation mediated by SINAT1, SINAT2, SINAT3 and SINAT4, and promoting FREE1 accumulation. This Arabidopsis thaliana (Mouse-ear cress) protein is E3 ubiquitin-protein ligase SINAT5.